A 192-amino-acid polypeptide reads, in one-letter code: NOP protein chaperone 1 (192 aa).

Residues 1–26 are compositionally biased toward low complexity; it reads MEVSGESHSGPSCSSSSRDGSGVSVS. Residues 1 to 39 form a disordered region; sequence MEVSGESHSGPSCSSSSRDGSGVSVSKELLMAGSGGRGG. 2 positions are modified to phosphoserine: serine 34 and serine 66. Residues 118-192 are disordered; sequence FEMNQSHSKE…SENKEKQENK (75 aa). Positions 129-152 are enriched in acidic residues; it reads DSSEENSQDSSEESSESEDEDDST. The span at 164–177 shows a compositional bias: basic and acidic residues; it reads KLPHSEDGKGKIEV. Serine 180 is modified (phosphoserine).

In terms of assembly, interacts with NOP58, RUVBL1 and RUVBL2; the interactions are direct and NOPCHAP1 bridges the association of NOP58 with RUVBL1:RUVBL2 even in absence of snoRNAs. The interactions with RUVBL1 and RUVBL2 are disrupted upon ATP binding.

The protein localises to the nucleus. Client-loading PAQosome/R2TP complex cofactor that selects NOP58 to promote box C/D small nucleolar ribonucleoprotein (snoRNP) assembly. Acts as a bridge between NOP58 and the R2TP complex via RUVBL1:RUVBL2. The chain is NOP protein chaperone 1 (NOPCHAP1) from Bos taurus (Bovine).